We begin with the raw amino-acid sequence, 429 residues long: Zinc metalloproteinase nas-17 (429 aa).

An N-terminal signal peptide occupies residues 1 to 21 (MFLRPSTLLLTLFLALVAGSA). N-linked (GlcNAc...) asparagine glycosylation occurs at Asn-54. The region spanning 62 to 251 (RQITKIWKKW…VNINVRYSCG (190 aa)) is the Peptidase M12A domain. Cystine bridges form between Cys-104–Cys-250, Cys-125–Cys-144, Cys-252–Cys-272, and Cys-274–Cys-283. His-152 provides a ligand contact to Zn(2+). Glu-153 is a catalytic residue. Zn(2+) is bound by residues His-156 and His-162. In terms of domain architecture, EGF-like spans 245–284 (NVRYSCGCAKSLTCENGGYTNPSNCATCVCPTGFAGTLCN).

Requires Zn(2+) as cofactor.

Its subcellular location is the secreted. Its function is as follows. Metalloprotease. This is Zinc metalloproteinase nas-17 (nas-17) from Caenorhabditis elegans.